A 444-amino-acid polypeptide reads, in one-letter code: Glutamate--tRNA ligase 1 (444 aa).

The short motif at 10 to 20 (PSPTGRLHLGN) is the 'HIGH' region element. Positions 241-245 (GLSKR) match the 'KMSKS' region motif. K244 contributes to the ATP binding site.

Belongs to the class-I aminoacyl-tRNA synthetase family. Glutamate--tRNA ligase type 1 subfamily. In terms of assembly, monomer.

It is found in the cytoplasm. The enzyme catalyses tRNA(Glu) + L-glutamate + ATP = L-glutamyl-tRNA(Glu) + AMP + diphosphate. Functionally, catalyzes the attachment of glutamate to tRNA(Glu) in a two-step reaction: glutamate is first activated by ATP to form Glu-AMP and then transferred to the acceptor end of tRNA(Glu). The polypeptide is Glutamate--tRNA ligase 1 (Rhodospirillum rubrum (strain ATCC 11170 / ATH 1.1.1 / DSM 467 / LMG 4362 / NCIMB 8255 / S1)).